A 619-amino-acid polypeptide reads, in one-letter code: ATP-dependent DNA helicase RecQ (619 aa).

Positions 37 to 205 (INAALNGQDA…LRHLNLKNLH (169 aa)) constitute a Helicase ATP-binding domain. Position 50 to 57 (50 to 57 (MATGNGKS)) interacts with ATP. The short motif at 149–152 (DEAH) is the DEAH box element. Residues 229-374 (QLTRFVLAQK…QIEQHKLEAI (146 aa)) enclose the Helicase C-terminal domain. Zn(2+) is bound by residues C383, C400, C403, and C406. The region spanning 535 to 615 (ANYDKDLFAR…QEHKAILANA (81 aa)) is the HRDC domain.

The protein belongs to the helicase family. RecQ subfamily. The cofactor is Mg(2+). It depends on Zn(2+) as a cofactor.

The enzyme catalyses Couples ATP hydrolysis with the unwinding of duplex DNA by translocating in the 3'-5' direction.. It catalyses the reaction ATP + H2O = ADP + phosphate + H(+). Its function is as follows. An ATP-dependent DNA helicase which unwinds DNA in a 3'-5' direction. Plays a role in recombination. The chain is ATP-dependent DNA helicase RecQ from Haemophilus influenzae (strain ATCC 51907 / DSM 11121 / KW20 / Rd).